The sequence spans 605 residues: Cystathionine gamma-synthase-like enzyme iboG1 (605 aa).

Tyr-289 contributes to the substrate binding site. Lys-393 bears the N6-(pyridoxal phosphate)lysine mark.

It belongs to the trans-sulfuration enzymes family. Requires pyridoxal 5'-phosphate as cofactor.

The protein operates within secondary metabolite biosynthesis. In terms of biological role, cystathionine gamma-synthase-like enzyme; part of the gene cluster that mediates the biosynthesis of the psychoactive metabolites ibotenic acid and muscimol. The first committed step is glutamate hydroxylation by the 2-oxoglutarate-dependent dioxygenase iboH, and the last step is decarboxylation of ibotenic acid to muscimol by the decarboxylase iboD. The order of the intermediate reactions is somewhat ambiguous. IboA likely activates the carboxylic acid at position 5 to introduce an amide bond, and the flavin monooxygenase iboF generates the N-O bond. There are several options for the latter step. One option is that iboF directly hydroxylates the amide nitrogen formed by iboA to produce a hydroxamic acid species. Another option is that iboF hydroxylates an external N-containing compound, whose resulting N-O bond is subsequently introduced into the hydroxyglutamate scaffold. The paralogous PLP-dependent cystathionine gamma-synthase-like enzymes iboG1 and iboG2 are likely involved in substitution of the OH group at position 3 by the O-N moiety. The first cyclic intermediate is most probably tricholomic acid which is likely desaturated to ibotenic acid by the cytochrome P450 monooxygenase iboC. The sequence is that of Cystathionine gamma-synthase-like enzyme iboG1 (iboG1) from Amanita muscaria (strain Koide BX008).